A 173-amino-acid chain; its full sequence is NADH-ubiquinone oxidoreductase chain 6 (173 aa).

5 helical membrane passes run 1–21 (MVYFVSMMMIGLILGLMGVAS), 28–48 (AALGLVTAAGVGCGLLVSYGG), 53–73 (LILFLIYLGGMLVVFAYTAAL), 87–107 (VLMYVGIYLTGLVIAGKYFLV), and 139–159 (LGGWMLVLSGWVLLVTLFVVL).

It belongs to the complex I subunit 6 family.

The protein localises to the mitochondrion membrane. It carries out the reaction a ubiquinone + NADH + 5 H(+)(in) = a ubiquinol + NAD(+) + 4 H(+)(out). Its function is as follows. Core subunit of the mitochondrial membrane respiratory chain NADH dehydrogenase (Complex I) that is believed to belong to the minimal assembly required for catalysis. Complex I functions in the transfer of electrons from NADH to the respiratory chain. The immediate electron acceptor for the enzyme is believed to be ubiquinone. The chain is NADH-ubiquinone oxidoreductase chain 6 (MT-ND6) from Scyliorhinus canicula (Small-spotted catshark).